The following is a 333-amino-acid chain: Dehydrodolichyl diphosphate synthase complex subunit DHDDS (333 aa).

5 residues coordinate (2E,6E)-farnesyl diphosphate: D34, G35, R37, R38, and R85. D34, G35, R37, R38, R85, R205, R211, and S213 together coordinate isopentenyl diphosphate. D34 contributes to the Mg(2+) binding site.

This sequence belongs to the UPP synthase family. In terms of assembly, the active dehydrodolichyl diphosphate synthase complex is a heterotetramer composed of a dimer of heterodimer of DHDDS and NUS1. Interacts with NPC2. Mg(2+) serves as cofactor. Ubiquitous. Expressed at high levels in testis and kidney. Expressed in epididymis (at protein level).

Its subcellular location is the endoplasmic reticulum membrane. It carries out the reaction n isopentenyl diphosphate + (2E,6E)-farnesyl diphosphate = a di-trans,poly-cis-polyprenyl diphosphate + n diphosphate. It functions in the pathway protein modification; protein glycosylation. Its pathway is lipid metabolism. Activated by phospholipids including cardiolipin, phosphatidylcholine, phosphatidylethanolamine, phosphatidylinositol and phosphatidylserine. In terms of biological role, with NUS1, forms the dehydrodolichyl diphosphate synthase (DDS) complex, an essential component of the dolichol monophosphate (Dol-P) biosynthetic machinery. Both subunits contribute to enzymatic activity, i.e. condensation of multiple copies of isopentenyl pyrophosphate (IPP) to farnesyl pyrophosphate (FPP) to produce dehydrodolichyl diphosphate (Dedol-PP), a precursor of dolichol phosphate which is utilized as a sugar carrier in protein glycosylation in the endoplasmic reticulum (ER). Synthesizes long-chain polyprenols, mostly of C95 and C100 chain length. Regulates the glycosylation and stability of nascent NPC2, thereby promoting trafficking of LDL-derived cholesterol. This is Dehydrodolichyl diphosphate synthase complex subunit DHDDS from Homo sapiens (Human).